Consider the following 326-residue polypeptide: Nicotianamine synthase 2 (326 aa).

It belongs to the nicotianamine synthase (NAS)-like family. As to expression, expressed in roots.

It catalyses the reaction 3 S-adenosyl-L-methionine = nicotianamine + 3 S-methyl-5'-thioadenosine + 3 H(+). Synthesizes nicotianamine, a polyamine that is the first intermediate in the synthesis of the phytosiderophores of the mugineic acid type found in gramineae which serve as a sensor for the physiological iron status within the plant, and/or might be involved in the transport of iron. In Oryza sativa subsp. indica (Rice), this protein is Nicotianamine synthase 2 (NAS2).